A 513-amino-acid chain; its full sequence is ATP synthase subunit alpha (513 aa).

169–176 (GDRQIGKT) serves as a coordination point for ATP.

This sequence belongs to the ATPase alpha/beta chains family. F-type ATPases have 2 components, CF(1) - the catalytic core - and CF(0) - the membrane proton channel. CF(1) has five subunits: alpha(3), beta(3), gamma(1), delta(1), epsilon(1). CF(0) has three main subunits: a(1), b(2) and c(9-12). The alpha and beta chains form an alternating ring which encloses part of the gamma chain. CF(1) is attached to CF(0) by a central stalk formed by the gamma and epsilon chains, while a peripheral stalk is formed by the delta and b chains.

The protein localises to the cell inner membrane. The enzyme catalyses ATP + H2O + 4 H(+)(in) = ADP + phosphate + 5 H(+)(out). Its function is as follows. Produces ATP from ADP in the presence of a proton gradient across the membrane. The alpha chain is a regulatory subunit. The polypeptide is ATP synthase subunit alpha (Shewanella woodyi (strain ATCC 51908 / MS32)).